A 374-amino-acid chain; its full sequence is tRNA-specific 2-thiouridylase MnmA (374 aa).

ATP is bound by residues 8-15 (GLSGGVDS) and Met-34. An interaction with target base in tRNA region spans residues 104 to 106 (NPD). Cys-109 (nucleophile) is an active-site residue. An intrachain disulfide couples Cys-109 to Cys-208. Residue Gly-134 participates in ATP binding. The tract at residues 158–160 (KDQ) is interaction with tRNA. Cys-208 acts as the Cysteine persulfide intermediate in catalysis. Residues 321–322 (RY) form an interaction with tRNA region.

This sequence belongs to the MnmA/TRMU family.

Its subcellular location is the cytoplasm. The enzyme catalyses S-sulfanyl-L-cysteinyl-[protein] + uridine(34) in tRNA + AH2 + ATP = 2-thiouridine(34) in tRNA + L-cysteinyl-[protein] + A + AMP + diphosphate + H(+). Catalyzes the 2-thiolation of uridine at the wobble position (U34) of tRNA, leading to the formation of s(2)U34. This is tRNA-specific 2-thiouridylase MnmA from Mesoplasma florum (strain ATCC 33453 / NBRC 100688 / NCTC 11704 / L1) (Acholeplasma florum).